The following is a 492-amino-acid chain: N-succinylglutamate 5-semialdehyde dehydrogenase (492 aa).

Residue 220 to 225 participates in NAD(+) binding; that stretch reads GSASTG. Active-site residues include Glu243 and Cys277.

It belongs to the aldehyde dehydrogenase family. AstD subfamily.

The catalysed reaction is N-succinyl-L-glutamate 5-semialdehyde + NAD(+) + H2O = N-succinyl-L-glutamate + NADH + 2 H(+). The protein operates within amino-acid degradation; L-arginine degradation via AST pathway; L-glutamate and succinate from L-arginine: step 4/5. Catalyzes the NAD-dependent reduction of succinylglutamate semialdehyde into succinylglutamate. This is N-succinylglutamate 5-semialdehyde dehydrogenase from Salmonella gallinarum (strain 287/91 / NCTC 13346).